A 616-amino-acid polypeptide reads, in one-letter code: Dihydroxy-acid dehydratase (616 aa).

Residue Asp-81 participates in Mg(2+) binding. Cys-122 contributes to the [2Fe-2S] cluster binding site. The Mg(2+) site is built by Asp-123 and Lys-124. An N6-carboxylysine modification is found at Lys-124. Position 195 (Cys-195) interacts with [2Fe-2S] cluster. Glu-491 lines the Mg(2+) pocket. The active-site Proton acceptor is the Ser-517.

It belongs to the IlvD/Edd family. In terms of assembly, homodimer. [2Fe-2S] cluster serves as cofactor. It depends on Mg(2+) as a cofactor.

The catalysed reaction is (2R)-2,3-dihydroxy-3-methylbutanoate = 3-methyl-2-oxobutanoate + H2O. It catalyses the reaction (2R,3R)-2,3-dihydroxy-3-methylpentanoate = (S)-3-methyl-2-oxopentanoate + H2O. It functions in the pathway amino-acid biosynthesis; L-isoleucine biosynthesis; L-isoleucine from 2-oxobutanoate: step 3/4. Its pathway is amino-acid biosynthesis; L-valine biosynthesis; L-valine from pyruvate: step 3/4. Functionally, functions in the biosynthesis of branched-chain amino acids. Catalyzes the dehydration of (2R,3R)-2,3-dihydroxy-3-methylpentanoate (2,3-dihydroxy-3-methylvalerate) into 2-oxo-3-methylpentanoate (2-oxo-3-methylvalerate) and of (2R)-2,3-dihydroxy-3-methylbutanoate (2,3-dihydroxyisovalerate) into 2-oxo-3-methylbutanoate (2-oxoisovalerate), the penultimate precursor to L-isoleucine and L-valine, respectively. The chain is Dihydroxy-acid dehydratase from Salmonella newport (strain SL254).